Here is a 142-residue protein sequence, read N- to C-terminus: Protein KNATM (142 aa).

Residues 4–36 are a coiled coil; sequence KKDENSILENMKQEINHSLKEEAQEEEEILKKR.

In terms of assembly, interacts with KNAT1, KNAT3, KNAT4, BEL1, BLH2, BLH4 and BLH9, but not with BLH8 or the KNATM-A and KNATM-C isoforms. Isoforms KNATM-A and KNATM-C: no interactions with KNATM-B, KNOXX or BELL proteins. In terms of tissue distribution, detected in inflorescences, seedlings, leaves, hydathodes, stems, roots, embryo and siliques. Expressed in a polar pattern in organ primordia and at the boundary of mature organs. Detected in the lateral domains of flower meristems, but not in the inflorescence meristem or the vegetative shoot apical meristem.

It is found in the cytoplasm. It localises to the nucleus. Functionally, transcriptional regulator involved in leaf proximal/distal patterning. May act by sequestering BELL transcription factors. This is Protein KNATM from Arabidopsis thaliana (Mouse-ear cress).